Reading from the N-terminus, the 165-residue chain is ATP synthase subunit b (165 aa).

The chain crosses the membrane as a helical span at residues 11–31 (LIFWTIVNFLLLVFLLGKFAW).

This sequence belongs to the ATPase B chain family. F-type ATPases have 2 components, F(1) - the catalytic core - and F(0) - the membrane proton channel. F(1) has five subunits: alpha(3), beta(3), gamma(1), delta(1), epsilon(1). F(0) has three main subunits: a(1), b(2) and c(10-14). The alpha and beta chains form an alternating ring which encloses part of the gamma chain. F(1) is attached to F(0) by a central stalk formed by the gamma and epsilon chains, while a peripheral stalk is formed by the delta and b chains.

Its subcellular location is the cell membrane. In terms of biological role, f(1)F(0) ATP synthase produces ATP from ADP in the presence of a proton or sodium gradient. F-type ATPases consist of two structural domains, F(1) containing the extramembraneous catalytic core and F(0) containing the membrane proton channel, linked together by a central stalk and a peripheral stalk. During catalysis, ATP synthesis in the catalytic domain of F(1) is coupled via a rotary mechanism of the central stalk subunits to proton translocation. Functionally, component of the F(0) channel, it forms part of the peripheral stalk, linking F(1) to F(0). The protein is ATP synthase subunit b of Elusimicrobium minutum (strain Pei191).